The chain runs to 541 residues: Nucleoporin NUP57 (541 aa).

Positions Met-1–Asn-13 are enriched in low complexity. The tract at residues Met-1–Gln-261 is disordered. 2 FG repeats span residues Phe-2–Gly-3 and Phe-11–Gly-12. The span at Thr-19–Ala-36 shows a compositional bias: polar residues. FXFG repeat units lie at residues Phe-21–Gly-24 and Phe-39–Gly-42. FG repeat units lie at residues Phe-56–Gly-57 and Phe-65–Gly-66. The segment covering Ala-58–Ser-72 has biased composition (polar residues). Residues Gly-76–Gly-79 form a GLFG 1 repeat. A compositionally biased stretch (low complexity) spans Ala-83–Thr-102. GLFG repeat units follow at residues Gly-103–Gly-106, Gly-120–Gly-123, Gly-132–Gly-135, and Gly-147–Gly-150. The segment covering Phe-105–Thr-116 has biased composition (polar residues). A compositionally biased stretch (polar residues) spans Lys-125–Gly-146. Residues Val-153 to Asn-172 show a composition bias toward polar residues. GLFG repeat units lie at residues Gly-175–Gly-178, Gly-190–Gly-193, Gly-204–Gly-207, and Gly-220–Gly-223. The span at Pro-228 to Leu-257 shows a compositional bias: polar residues. The stretch at Ile-398–Arg-425 forms a coiled coil.

It belongs to the nucleoporin GLFG family. In terms of assembly, component of the nuclear pore complex (NPC). NPC constitutes the exclusive means of nucleocytoplasmic transport. NPCs allow the passive diffusion of ions and small molecules and the active, nuclear transport receptor-mediated bidirectional transport of macromolecules such as proteins, RNAs, ribonucleoparticles (RNPs), and ribosomal subunits across the nuclear envelope. Due to its 8-fold rotational symmetry, all subunits are present with 8 copies or multiples thereof. NUP57 is part of the NUP57 subcomplex (NIC96, NSP1, NUP49, NUP57) interacting with NUP49 and NSP1. Interacts through its FG repeats with karyopherins.

The protein localises to the nucleus. Its subcellular location is the nuclear pore complex. The protein resides in the nucleus membrane. Its function is as follows. Functions as a component of the nuclear pore complex (NPC). NPC components, collectively referred to as nucleoporins (NUPs), can play the role of both NPC structural components and of docking or interaction partners for transiently associated nuclear transport factors. Active directional transport is assured by both, a Phe-Gly (FG) repeat affinity gradient for these transport factors across the NPC and a transport cofactor concentration gradient across the nuclear envelope (GSP1 and GSP2 GTPases associated predominantly with GTP in the nucleus, with GDP in the cytoplasm). NUP57 plays an important role in several nuclear transport pathways including poly(A)+ RNA, tRNA, and pre-ribosome transport. The protein is Nucleoporin NUP57 (NUP57) of Saccharomyces cerevisiae (strain ATCC 204508 / S288c) (Baker's yeast).